The sequence spans 590 residues: Transcription factor bHLH13 (590 aa).

Disordered stretches follow at residues 274–296 (LQHHQHHQQQQQQPPQQQQHRQF) and 385–439 (AASS…EAER). Over residues 281–293 (QQQQQQPPQQQQH) the composition is skewed to low complexity. Residues 416–425 (RPRKRGRRPA) are compositionally biased toward basic residues. The bHLH domain occupies 429 to 478 (AEALNHVEAERQRREKLNQRFYALRSVVPNISKMDKASLLGDAVSYINEL).

As to quaternary structure, homodimer.

It is found in the nucleus. The protein is Transcription factor bHLH13 (BHLH13) of Arabidopsis thaliana (Mouse-ear cress).